Consider the following 424-residue polypeptide: Cytoplasmic tRNA 2-thiolation protein 2 (424 aa).

Residues proline 357–aspartate 385 are disordered. The span at leucine 368–aspartate 385 shows a compositional bias: basic and acidic residues.

Belongs to the CTU2/NCS2 family.

It localises to the cytoplasm. It functions in the pathway tRNA modification; 5-methoxycarbonylmethyl-2-thiouridine-tRNA biosynthesis. Its function is as follows. Plays a central role in 2-thiolation of mcm(5)S(2)U at tRNA wobble positions of tRNA(Lys), tRNA(Glu) and tRNA(Gln). May act by forming a heterodimer with NCS6 that ligates sulfur from thiocarboxylated URM1 onto the uridine of tRNAs at wobble position. Prior mcm(5) tRNA modification by the elongator complex is required for 2-thiolation. May also be involved in protein urmylation. The chain is Cytoplasmic tRNA 2-thiolation protein 2 from Yarrowia lipolytica (strain CLIB 122 / E 150) (Yeast).